The chain runs to 474 residues: 1-aminocyclopropane-1-carboxylate synthase 4 (474 aa).

The substrate site is built by E47 and Y85. N6-(pyridoxal phosphate)lysine is present on K273.

Belongs to the class-I pyridoxal-phosphate-dependent aminotransferase family. As to quaternary structure, homodimer and heterodimer. In vivo, the relevance of heterodimerization with other ACS enzymes is however unsure. Interacts with XBAT32. Interacts (via its C-terminal region) with ETO1 and EOL1. The cofactor is pyridoxal 5'-phosphate. In terms of processing, ubiquitinated by XBAT32. Ubiquitination probably leads to its subsequent degradation, thus controlling ethylene production. In terms of tissue distribution, expressed in roots, leaves and flowers.

The enzyme catalyses S-adenosyl-L-methionine = 1-aminocyclopropane-1-carboxylate + S-methyl-5'-thioadenosine + H(+). Its pathway is alkene biosynthesis; ethylene biosynthesis via S-adenosyl-L-methionine; ethylene from S-adenosyl-L-methionine: step 1/2. Functionally, 1-aminocyclopropane-1-carboxylate synthase (ACS) enzymes catalyze the conversion of S-adenosyl-L-methionine (SAM) into 1-aminocyclopropane-1-carboxylate (ACC), a direct precursor of ethylene. This chain is 1-aminocyclopropane-1-carboxylate synthase 4 (ACS4), found in Arabidopsis thaliana (Mouse-ear cress).